The sequence spans 255 residues: Venom allergen-1 (255 aa).

Positions 1 to 21 (MASHVIVKFITAAILIGSCYA) are cleaved as a signal peptide. Residues 65–210 (LKKHNELRAE…VIKYYLVCNY (146 aa)) form the SCP domain. Asparagine 146 and asparagine 209 each carry an N-linked (GlcNAc...) asparagine glycan.

It belongs to the CRISP family. As to quaternary structure, interacts with human LRPPRC; the interaction interrupts association between BECN1 and LRPPRC. Interacts with human CD4. In terms of assembly, (Microbial infection) Interacts with Zika virus envelope protein E and Zika virus-like particles; the interaction does not affect Zika virus replication in human endothelial cells and keratinocytes. As to expression, saliva (at protein level). Female salivary gland. No or low-level expression in female hemolymph, midgut, Malpighian tubule system and ovary. No or low-level expression in male tissues.

It is found in the secreted. It localises to the host endosome. The protein resides in the host mitochondrion. Functionally, activates autophagy in human monocytic cells, dendritic cells and macrophages. Promotes activation of human CD4(+) T-cells. Does not affect cytokine expression in human monocytic cells. Its function is as follows. (Microbial infection) Promotes dengue virus type 2 replication in human monocytic cells, dendritic cells and macrophages. Pro-viral properties are linked to BECN1-mediated autophagy activation in the host. Does not directly interact with the purified envelope protein of dengue virus type 2. In terms of biological role, (Microbial infection) Promotes Zika virus replication in human monocytic cells, dendritic cells and macrophages. Facilitates Zika virus transmission from infected mosquitoes to the host in mouse model. Pro-viral properties are linked to BECN1-mediated autophagy activation in the host. Does not affect Zika virus replication in human endothelial cells and keratinocytes. (Microbial infection) Promotes Semliki Forest virus replication in human monocytic cells. Functionally, (Microbial infection) Does not influence Batai virus replication in human monocytic cells. This is Venom allergen-1 from Aedes aegypti (Yellowfever mosquito).